The primary structure comprises 145 residues: LIRP (145 aa).

Residues 1 to 19 (MWKLCLRLLAVLAVCLSTA) constitute a signal peptide (or 22). 2 propeptides span residues 20–33 (TQAQ…SPKR) and 117–122 (FRRRTR). 3 disulfides stabilise this stretch: cysteine 44/cysteine 129, cysteine 56/cysteine 142, and cysteine 128/cysteine 133.

It belongs to the insulin family. Heterodimer of a B chain and an A chain linked by two disulfide bonds.

The protein localises to the secreted. The chain is LIRP from Locusta migratoria (Migratory locust).